A 361-amino-acid chain; its full sequence is Beta-hexosaminidase (361 aa).

Substrate contacts are provided by residues D69, R77, R144, and 174 to 175 (KH). The active-site Proton donor/acceptor is H187. D258 functions as the Nucleophile in the catalytic mechanism.

It belongs to the glycosyl hydrolase 3 family. NagZ subfamily.

It is found in the cytoplasm. It carries out the reaction Hydrolysis of terminal non-reducing N-acetyl-D-hexosamine residues in N-acetyl-beta-D-hexosaminides.. The protein operates within cell wall biogenesis; peptidoglycan recycling. Plays a role in peptidoglycan recycling by cleaving the terminal beta-1,4-linked N-acetylglucosamine (GlcNAc) from peptide-linked peptidoglycan fragments, giving rise to free GlcNAc, anhydro-N-acetylmuramic acid and anhydro-N-acetylmuramic acid-linked peptides. In Neisseria meningitidis serogroup C / serotype 2a (strain ATCC 700532 / DSM 15464 / FAM18), this protein is Beta-hexosaminidase.